The sequence spans 953 residues: Protein translocase subunit SecA 1 (953 aa).

ATP is bound by residues Q83, 101-105, and D490; that span reads GEGKT. Residues 854-867 are compositionally biased toward low complexity; it reads AAAAAAKASDSAAK. The disordered stretch occupies residues 854–953; sequence AAAAAAKASD…DRPAKSHRKG (100 aa). Residues 929-947 show a composition bias toward basic and acidic residues; that stretch reads SRRERREAARKQAKADRPA.

The protein belongs to the SecA family. In terms of assembly, monomer and homodimer. Part of the essential Sec protein translocation apparatus which comprises SecA, SecYEG and auxiliary proteins SecDF. Other proteins may also be involved.

Its subcellular location is the cell membrane. The protein resides in the cytoplasm. It carries out the reaction ATP + H2O + cellular proteinSide 1 = ADP + phosphate + cellular proteinSide 2.. Part of the Sec protein translocase complex. Interacts with the SecYEG preprotein conducting channel. Has a central role in coupling the hydrolysis of ATP to the transfer of proteins into and across the cell membrane, serving as an ATP-driven molecular motor driving the stepwise translocation of polypeptide chains across the membrane. This is Protein translocase subunit SecA 1 from Mycolicibacterium smegmatis (strain ATCC 700084 / mc(2)155) (Mycobacterium smegmatis).